Reading from the N-terminus, the 308-residue chain is Probable inositol oxygenase (308 aa).

Substrate is bound by residues R49 and 106 to 108 (DDS). The Fe cation site is built by H119, H144, and D145. Substrate is bound by residues K148 and 165–166 (GD). Fe cation-binding residues include H217, H243, and D276. 243–244 (HS) contributes to the substrate binding site.

This sequence belongs to the myo-inositol oxygenase family. It depends on Fe cation as a cofactor.

Its subcellular location is the cytoplasm. It catalyses the reaction myo-inositol + O2 = D-glucuronate + H2O + H(+). It functions in the pathway polyol metabolism; myo-inositol degradation into D-glucuronate; D-glucuronate from myo-inositol: step 1/1. Functionally, involved in the biosynthesis of UDP-glucuronic acid (UDP-GlcA), providing nucleotide sugars for cell-wall polymers. May be also involved in plant ascorbate biosynthesis. This is Probable inositol oxygenase from Oryza sativa subsp. japonica (Rice).